A 479-amino-acid chain; its full sequence is B-cell CLL/lymphoma 6 member B protein (479 aa).

Positions 38 to 105 constitute a BTB domain; that stretch reads TDVTLLVGGQ…MYTSRLRLSP (68 aa). Disordered regions lie at residues 143–190 and 210–259; these read RPLE…PDPK and GSLV…LSPT. The span at 147–160 shows a compositional bias: pro residues; that stretch reads AEPPTPPTAPPPGS. Residues 162–172 show a composition bias toward basic and acidic residues; it reads RRSEGHPDPPT. Positions 234–244 are enriched in low complexity; sequence SSSSSSSSSSS. 5 C2H2-type zinc fingers span residues 328 to 350, 356 to 378, 384 to 406, 412 to 434, and 440 to 463; these read YKCQ…RTVH, YHCS…SRIH, YKCE…VLIH, YPCP…VRIH, and YHCD…RQKH.

As to quaternary structure, associates with BCL6 through the BTB domain. Ubiquitously expressed with higher expression found in heart and placenta.

Its subcellular location is the nucleus. Functionally, acts as a sequence-specific transcriptional repressor in association with BCL6. May function in a narrow stage or be related to some events in the early B-cell development. The protein is B-cell CLL/lymphoma 6 member B protein (BCL6B) of Homo sapiens (Human).